We begin with the raw amino-acid sequence, 246 residues long: Proteasome subunit alpha type-6-A (246 aa).

This sequence belongs to the peptidase T1A family. In terms of assembly, component of the 20S core complex of the 26S proteasome. The 26S proteasome is composed of a core protease (CP), known as the 20S proteasome, capped at one or both ends by the 19S regulatory particle (RP/PA700). The 20S proteasome core is composed of 28 subunits that are arranged in four stacked rings, resulting in a barrel-shaped structure. The two end rings are each formed by seven alpha subunits, and the two central rings are each formed by seven beta subunits. The catalytic chamber with the active sites is on the inside of the barrel. As to expression, ubiquitous low levels, higher expression in siliques and flowers.

Its subcellular location is the cytoplasm. It localises to the nucleus. Functionally, the proteasome is a multicatalytic proteinase complex which is characterized by its ability to cleave peptides with Arg, Phe, Tyr, Leu, and Glu adjacent to the leaving group at neutral or slightly basic pH. The proteasome has an ATP-dependent proteolytic activity. The chain is Proteasome subunit alpha type-6-A (PAA1) from Arabidopsis thaliana (Mouse-ear cress).